The chain runs to 166 residues: NAD(P)H-quinone oxidoreductase subunit I, chloroplastic (166 aa).

4Fe-4S ferredoxin-type domains lie at 55–84 (GRIH…VDWK) and 95–124 (LNYS…MTEE). Residues C64, C67, C70, C74, C104, C107, C110, and C114 each contribute to the [4Fe-4S] cluster site.

It belongs to the complex I 23 kDa subunit family. NDH is composed of at least 16 different subunits, 5 of which are encoded in the nucleus. The cofactor is [4Fe-4S] cluster.

It is found in the plastid. Its subcellular location is the chloroplast thylakoid membrane. It carries out the reaction a plastoquinone + NADH + (n+1) H(+)(in) = a plastoquinol + NAD(+) + n H(+)(out). It catalyses the reaction a plastoquinone + NADPH + (n+1) H(+)(in) = a plastoquinol + NADP(+) + n H(+)(out). NDH shuttles electrons from NAD(P)H:plastoquinone, via FMN and iron-sulfur (Fe-S) centers, to quinones in the photosynthetic chain and possibly in a chloroplast respiratory chain. The immediate electron acceptor for the enzyme in this species is believed to be plastoquinone. Couples the redox reaction to proton translocation, and thus conserves the redox energy in a proton gradient. The polypeptide is NAD(P)H-quinone oxidoreductase subunit I, chloroplastic (Tridax balbisioides (Coatbuttons)).